We begin with the raw amino-acid sequence, 216 residues long: Maintenance of carboxysome distribution protein A (216 aa).

Residues glycine 16, glycine 17, glycine 19, lysine 20, threonine 21, threonine 22, and glutamine 45 each coordinate ATP. Threonine 21 provides a ligand contact to Mg(2+).

This sequence belongs to the ParA family. McdA subfamily. In terms of assembly, self-associates, associates with McdB.

The protein resides in the cytoplasm. Its subcellular location is the nucleoid. The enzyme catalyses ATP + H2O = ADP + phosphate + H(+). McdA and McdB together mediate carboxysome positioning on the nucleoid and prevent their aggregation in the cell. McdA is an ATPase that forms dynamic gradients on the nucleoid in response to adapter protein McdB, which associates with carboxysomes. The interplay between McdA gradients on the nucleoid and McdB-bound carboxysomes result in the equal spacing of Cbs along the cell length. Its function is as follows. Incorrect positioning (aggregation) of carboxysomes results in reduced CO(2) fixation by encapsulated form 1 ribulose-1,5-bisphosphate carboxylase (RuBisCO, cbbL/cbbS), which leads to slower growth. The polypeptide is Maintenance of carboxysome distribution protein A (Halothiobacillus neapolitanus (strain ATCC 23641 / c2) (Thiobacillus neapolitanus)).